The chain runs to 364 residues: Nucleosome assembly protein 1;2 (364 aa).

Positions 32-86 (VESIKNTLQGLAARHTDVLESLEPKVRKRVEVLREIQSQHDDLEAKFFEERAALE) form a coiled coil. A Nuclear export signal motif is present at residues 53–68 (LEPKVRKRVEVLREIQ). The short motif at 227-232 (KKKPKK) is the Nuclear localization signal element. 2 disordered regions span residues 250 to 269 (FNFF…DEDT) and 301 to 364 (GEAA…CKQQ). Composition is skewed to acidic residues over residues 259–269 (PDDDEEIDEDT) and 304–340 (AQDE…DDED). Position 361 is a cysteine methyl ester (Cys361). Cys361 carries the S-farnesyl cysteine lipid modification. Positions 362–364 (KQQ) are cleaved as a propeptide — removed in mature form.

Belongs to the nucleosome assembly protein (NAP) family.

It localises to the nucleus. It is found in the cytoplasm. May modulate chromatin structure by regulation of nucleosome assembly/disassembly. This is Nucleosome assembly protein 1;2 (NAP1;2) from Oryza sativa subsp. japonica (Rice).